We begin with the raw amino-acid sequence, 421 residues long: Imidazolonepropionase (421 aa).

Positions 80 and 82 each coordinate Fe(3+). Residues His-80 and His-82 each coordinate Zn(2+). 3 residues coordinate 4-imidazolone-5-propanoate: Arg-89, Tyr-152, and His-185. Tyr-152 lines the N-formimidoyl-L-glutamate pocket. Residue His-249 coordinates Fe(3+). A Zn(2+)-binding site is contributed by His-249. Residue Glu-252 participates in 4-imidazolone-5-propanoate binding. Fe(3+) is bound at residue Asp-324. Asp-324 provides a ligand contact to Zn(2+). Asn-326 and Gly-328 together coordinate N-formimidoyl-L-glutamate. Ser-329 serves as a coordination point for 4-imidazolone-5-propanoate.

This sequence belongs to the metallo-dependent hydrolases superfamily. HutI family. Zn(2+) serves as cofactor. The cofactor is Fe(3+).

The protein resides in the cytoplasm. The enzyme catalyses 4-imidazolone-5-propanoate + H2O = N-formimidoyl-L-glutamate. It functions in the pathway amino-acid degradation; L-histidine degradation into L-glutamate; N-formimidoyl-L-glutamate from L-histidine: step 3/3. Catalyzes the hydrolytic cleavage of the carbon-nitrogen bond in imidazolone-5-propanoate to yield N-formimidoyl-L-glutamate. It is the third step in the universal histidine degradation pathway. The protein is Imidazolonepropionase of Bacillus velezensis (strain DSM 23117 / BGSC 10A6 / LMG 26770 / FZB42) (Bacillus amyloliquefaciens subsp. plantarum).